Reading from the N-terminus, the 349-residue chain is Probable dual-specificity RNA methyltransferase RlmN (349 aa).

The Proton acceptor role is filled by glutamate 94. The 225-residue stretch at 100–324 (YKTHTSICLS…NKNNVNTTIR (225 aa)) folds into the Radical SAM core domain. An intrachain disulfide couples cysteine 107 to cysteine 335. [4Fe-4S] cluster-binding residues include cysteine 114, cysteine 118, and cysteine 121. S-adenosyl-L-methionine is bound by residues 161–162 (GE), serine 193, 216–218 (SLH), and asparagine 292. Cysteine 335 functions as the S-methylcysteine intermediate in the catalytic mechanism.

This sequence belongs to the radical SAM superfamily. RlmN family. [4Fe-4S] cluster serves as cofactor.

The protein localises to the cytoplasm. The catalysed reaction is adenosine(2503) in 23S rRNA + 2 reduced [2Fe-2S]-[ferredoxin] + 2 S-adenosyl-L-methionine = 2-methyladenosine(2503) in 23S rRNA + 5'-deoxyadenosine + L-methionine + 2 oxidized [2Fe-2S]-[ferredoxin] + S-adenosyl-L-homocysteine. It carries out the reaction adenosine(37) in tRNA + 2 reduced [2Fe-2S]-[ferredoxin] + 2 S-adenosyl-L-methionine = 2-methyladenosine(37) in tRNA + 5'-deoxyadenosine + L-methionine + 2 oxidized [2Fe-2S]-[ferredoxin] + S-adenosyl-L-homocysteine. Its function is as follows. Specifically methylates position 2 of adenine 2503 in 23S rRNA and position 2 of adenine 37 in tRNAs. In Finegoldia magna (strain ATCC 29328 / DSM 20472 / WAL 2508) (Peptostreptococcus magnus), this protein is Probable dual-specificity RNA methyltransferase RlmN.